Reading from the N-terminus, the 678-residue chain is Glycine--tRNA ligase beta subunit (678 aa).

The protein belongs to the class-II aminoacyl-tRNA synthetase family. Tetramer of two alpha and two beta subunits.

The protein resides in the cytoplasm. The enzyme catalyses tRNA(Gly) + glycine + ATP = glycyl-tRNA(Gly) + AMP + diphosphate. The sequence is that of Glycine--tRNA ligase beta subunit from Streptococcus pneumoniae (strain P1031).